The following is a 424-amino-acid chain: 5-methylthioadenosine/S-adenosylhomocysteine deaminase (424 aa).

Zn(2+) is bound by residues histidine 60 and histidine 62. Residues glutamate 89 and histidine 181 each contribute to the substrate site. Histidine 208 contributes to the Zn(2+) binding site. Substrate contacts are provided by glutamate 211 and aspartate 296. Position 296 (aspartate 296) interacts with Zn(2+).

This sequence belongs to the metallo-dependent hydrolases superfamily. MTA/SAH deaminase family. The cofactor is Zn(2+).

It catalyses the reaction S-adenosyl-L-homocysteine + H2O + H(+) = S-inosyl-L-homocysteine + NH4(+). The enzyme catalyses S-methyl-5'-thioadenosine + H2O + H(+) = S-methyl-5'-thioinosine + NH4(+). In terms of biological role, catalyzes the deamination of 5-methylthioadenosine and S-adenosyl-L-homocysteine into 5-methylthioinosine and S-inosyl-L-homocysteine, respectively. Is also able to deaminate adenosine. The polypeptide is 5-methylthioadenosine/S-adenosylhomocysteine deaminase (Thermococcus sibiricus (strain DSM 12597 / MM 739)).